The chain runs to 62 residues: Alpha-elapitoxin-Nn2a (62 aa).

Residues 1–20 (LECHNQQSSQTPTTTDCSGG) are disordered. 4 disulfides stabilise this stretch: Cys3/Cys24, Cys17/Cys41, Cys43/Cys54, and Cys55/Cys60.

Belongs to the three-finger toxin family. Short-chain subfamily. Type I alpha-neurotoxin sub-subfamily. As to expression, expressed by the venom gland.

Its subcellular location is the secreted. In terms of biological role, nicotinic acetylcholine receptor antagonist. Binds to muscle nicotinic acetylcholine receptor (nAChR) and inhibits acetylcholine from binding to the receptor, thereby impairing neuromuscular transmission. Produces peripheral paralysis by blocking neuromuscular transmission at the postsynaptic site. Induces concentration-dependent inhibition of indirect twitches and abolishes contractile responses of tissues to exogenous acetylcholine and carbachol, in the chick biventer cervicis nerve-muscle preparation at 100-300 nM (in vitro). Prior incubation of tissues with Indian polyvalent antivenom (1 ml/0.6 mg) prevents the neurotoxic effects at 100 nM (in vitro). Addition of Indian polyvalent antivenom (1 ml/0.6 mg) at the t90 time point does not reverse the neurotoxic effects (in vitro). Displays non-competitive antagonism of concentration-response curves to carbachol, with a pA2 of 8.01 (in vitro). This chain is Alpha-elapitoxin-Nn2a, found in Naja naja (Indian cobra).